The following is a 122-amino-acid chain: Mth938 domain-containing protein (122 aa).

Positions 6-122 (IASLSWGQMK…RVGGVFHSTC (117 aa)) are MTH138-like domain.

Belongs to the AAMDC family.

It is found in the cytoplasm. May play a role in preadipocyte differentiation and adipogenesis. This Homo sapiens (Human) protein is Mth938 domain-containing protein (AAMDC).